Reading from the N-terminus, the 441-residue chain is Na(+)/H(+) antiporter NhaA 2 (441 aa).

12 consecutive transmembrane segments (helical) span residues 34 to 54 (VGGAVLLVASAVALVWANSPW), 77 to 97 (LTLGTWAADGLLAVFFLVVGL), 115 to 135 (ALPMAAAVGGMVVPALIFVAV), 146 to 166 (GWAIPTATDIAFAVAVLAVIS), 176 to 196 (FLLTLAVVDDLLAVTVIAVFY), 199 to 219 (EINLTALGLSIVPLALFALCV), 225 to 245 (SWWLLLPLGVATWVLMHESGV), 249 to 269 (VAGVLLGFTVPVLRSVAAGGP), 290 to 310 (VAVPVFAFFAAGVAIGGVSGL), 317 to 337 (PITLGIILGLVVGKPVGIFLT), 355 to 375 (WIDVFGVALLAGIGFTVSLLI), and 389 to 409 (FVKVGVLTGSLVAALIAAVLL).

This sequence belongs to the NhaA Na(+)/H(+) (TC 2.A.33) antiporter family.

The protein localises to the cell membrane. It carries out the reaction Na(+)(in) + 2 H(+)(out) = Na(+)(out) + 2 H(+)(in). Its function is as follows. Na(+)/H(+) antiporter that extrudes sodium in exchange for external protons. This chain is Na(+)/H(+) antiporter NhaA 2, found in Mycobacterium sp. (strain MCS).